We begin with the raw amino-acid sequence, 114 residues long: Putative pterin-4-alpha-carbinolamine dehydratase (114 aa).

Belongs to the pterin-4-alpha-carbinolamine dehydratase family.

The enzyme catalyses (4aS,6R)-4a-hydroxy-L-erythro-5,6,7,8-tetrahydrobiopterin = (6R)-L-erythro-6,7-dihydrobiopterin + H2O. In Methylococcus capsulatus (strain ATCC 33009 / NCIMB 11132 / Bath), this protein is Putative pterin-4-alpha-carbinolamine dehydratase.